Consider the following 160-residue polypeptide: uncharacterized protein (160 aa).

The helical transmembrane segment at 27-47 (VMNSYFIAGCGPAVCYYAVSW) threads the bilayer.

Its subcellular location is the membrane. This is an uncharacterized protein from Homo sapiens (Human).